The following is a 172-amino-acid chain: uncharacterized protein (172 aa).

A run of 4 helical transmembrane segments spans residues 20-40 (LVLITISIIALSTAYIAEYIF), 48-68 (CVYERFPYLMLIKISLTALII), 76-96 (LILILITILSSCILSTYHSFV), and 146-166 (MTEYNLLLNICLLIFLGLILF).

Its subcellular location is the cell membrane. This is an uncharacterized protein from Rickettsia prowazekii (strain Madrid E).